The chain runs to 23 residues: Alyteserin-1c (23 aa).

Ser-23 carries the serine amide modification.

In terms of tissue distribution, expressed by the skin glands.

The protein resides in the secreted. It is found in the target cell membrane. Antibacterial peptide with amphipathic alpha-helical structure that shows selective growth-inhibitory activity against Gram-negative bacteria but low hemolytic activity against human erythrocytes (LC(50)=145-220 uM). It is moderately active against the Gram-negative bacteria E.coli (MIC=25 uM), K.pneumoniae (MIC=50 uM), P.aeruginosa (MIC=25 uM), A.baumannii (MIC=6 uM), and is weaky active against the Gram-positive S.aureus (MIC=100-250 uM). The sequence is that of Alyteserin-1c from Alytes obstetricans (Common midwife toad).